We begin with the raw amino-acid sequence, 83 residues long: Turripeptide Lol11.1 (83 aa).

An N-terminal signal peptide occupies residues 1 to 27; the sequence is MARQMMTVGCLILIVVLLDMMVPVFNT.

Belongs to the conopeptide I2-like superfamily. Post-translationally, contains 4 disulfide bonds. Expressed by the venom duct.

Its subcellular location is the secreted. Acts as a neurotoxin by inhibiting voltage-gated potassium channels (Kv). This chain is Turripeptide Lol11.1, found in Iotyrris olangoensis (Sea snail).